Here is a 245-residue protein sequence, read N- to C-terminus: DNA repair protein RecO (245 aa).

The protein belongs to the RecO family.

In terms of biological role, involved in DNA repair and RecF pathway recombination. The chain is DNA repair protein RecO from Erwinia tasmaniensis (strain DSM 17950 / CFBP 7177 / CIP 109463 / NCPPB 4357 / Et1/99).